We begin with the raw amino-acid sequence, 256 residues long: Isoprenyl transferase (256 aa).

Asp-33 is a catalytic residue. Asp-33 lines the Mg(2+) pocket. Residues 34–37 (GNGR), Trp-38, Arg-46, His-50, and 78–80 (STE) each bind substrate. Asn-81 (proton acceptor) is an active-site residue. Substrate is bound by residues Trp-82, Arg-84, Arg-201, and 207-209 (RIS). Residue Glu-220 coordinates Mg(2+).

It belongs to the UPP synthase family. In terms of assembly, homodimer. The cofactor is Mg(2+).

Functionally, catalyzes the condensation of isopentenyl diphosphate (IPP) with allylic pyrophosphates generating different type of terpenoids. In Staphylococcus aureus (strain COL), this protein is Isoprenyl transferase.